We begin with the raw amino-acid sequence, 286 residues long: MKDRLFLLGQHLLPHHLLSRAAGRLAECRVPWVKNSLIKAFARHFQVDMGQALIEEPTAYEHFNAFFTRALKADARPLDPTPGAILSPADGAVSQLGSIEQGRVFQAKGHSFSVQELLGGDTASAASFQGGNFATVYLSPRDYHRVHMPLAGTLREMIHVPGKLYSVNRLTAENVPELFARNERLVCLFDTECGPMAVVLVGAMIVASIETVWAGVVTPPPRQIKRWRYDEATHPPVRLDKGAELGRFRLGSTVILLFGADRVRWRDGLAPLGELRMGQAIGQASV.

Active-site charge relay system; for autoendoproteolytic cleavage activity residues include Asp-90, His-147, and Ser-252. Ser-252 (schiff-base intermediate with substrate; via pyruvic acid; for decarboxylase activity) is an active-site residue. Ser-252 bears the Pyruvic acid (Ser); by autocatalysis mark.

It belongs to the phosphatidylserine decarboxylase family. PSD-B subfamily. Prokaryotic type I sub-subfamily. Heterodimer of a large membrane-associated beta subunit and a small pyruvoyl-containing alpha subunit. Pyruvate serves as cofactor. In terms of processing, is synthesized initially as an inactive proenzyme. Formation of the active enzyme involves a self-maturation process in which the active site pyruvoyl group is generated from an internal serine residue via an autocatalytic post-translational modification. Two non-identical subunits are generated from the proenzyme in this reaction, and the pyruvate is formed at the N-terminus of the alpha chain, which is derived from the carboxyl end of the proenzyme. The autoendoproteolytic cleavage occurs by a canonical serine protease mechanism, in which the side chain hydroxyl group of the serine supplies its oxygen atom to form the C-terminus of the beta chain, while the remainder of the serine residue undergoes an oxidative deamination to produce ammonia and the pyruvoyl prosthetic group on the alpha chain. During this reaction, the Ser that is part of the protease active site of the proenzyme becomes the pyruvoyl prosthetic group, which constitutes an essential element of the active site of the mature decarboxylase.

It is found in the cell membrane. It catalyses the reaction a 1,2-diacyl-sn-glycero-3-phospho-L-serine + H(+) = a 1,2-diacyl-sn-glycero-3-phosphoethanolamine + CO2. It functions in the pathway phospholipid metabolism; phosphatidylethanolamine biosynthesis; phosphatidylethanolamine from CDP-diacylglycerol: step 2/2. Catalyzes the formation of phosphatidylethanolamine (PtdEtn) from phosphatidylserine (PtdSer). The protein is Phosphatidylserine decarboxylase proenzyme of Azotobacter vinelandii (strain DJ / ATCC BAA-1303).